Reading from the N-terminus, the 217-residue chain is Peptidyl-tRNA hydrolase (217 aa).

Tyr14 lines the tRNA pocket. Residue His19 is the Proton acceptor of the active site. The tRNA site is built by Tyr64, Asn66, and Asn113. The disordered stretch occupies residues 182–217; it reads MNRINAPPPKPKREQKRSSDAPDSSSDTNTSNASDG. A compositionally biased stretch (low complexity) spans 202-217; it reads APDSSSDTNTSNASDG.

It belongs to the PTH family. In terms of assembly, monomer.

Its subcellular location is the cytoplasm. The catalysed reaction is an N-acyl-L-alpha-aminoacyl-tRNA + H2O = an N-acyl-L-amino acid + a tRNA + H(+). Its function is as follows. Hydrolyzes ribosome-free peptidyl-tRNAs (with 1 or more amino acids incorporated), which drop off the ribosome during protein synthesis, or as a result of ribosome stalling. Functionally, catalyzes the release of premature peptidyl moieties from peptidyl-tRNA molecules trapped in stalled 50S ribosomal subunits, and thus maintains levels of free tRNAs and 50S ribosomes. This is Peptidyl-tRNA hydrolase from Roseiflexus sp. (strain RS-1).